We begin with the raw amino-acid sequence, 461 residues long: Protein transport protein HofB homolog (461 aa).

222–229 (GPTGSGKT) contributes to the ATP binding site.

It belongs to the GSP E family.

This Escherichia coli (strain K12) protein is Protein transport protein HofB homolog (hofB).